The chain runs to 211 residues: Tudor-interacting repair regulator protein (211 aa).

Glycyl lysine isopeptide (Lys-Gly) (interchain with G-Cter in ubiquitin) cross-links involve residues Lys-10 and Lys-151. The interval 118–205 (TLEQLHAVEI…TEKQKKALEK (88 aa)) is interaction with PXN.

Belongs to the Nudix hydrolase family. TIRR subfamily. In terms of assembly, homodimer. Interacts with TP53BP1 (via the Tudor-like domain); interaction is abolished following DNA damage and TP53BP1 phosphorylation by ATM. Interacts (via the cytoplasmic part) with SDC4. Interacts with TGFB1I1 and PXN.

It is found in the nucleus. In terms of biological role, key regulator of TP53BP1 required to stabilize TP53BP1 and regulate its recruitment to chromatin. In absence of DNA damage, interacts with the tandem Tudor-like domain of TP53BP1, masking the region that binds histone H4 dimethylated at 'Lys-20' (H4K20me2), thereby preventing TP53BP1 recruitment to chromatin and maintaining TP53BP1 localization to the nucleus. Following DNA damage, ATM-induced phosphorylation of TP53BP1 and subsequent recruitment of RIF1 leads to dissociate NUDT16L1/TIRR from TP53BP1, unmasking the tandem Tudor-like domain and allowing recruitment of TP53BP1 to DNA double strand breaks (DSBs). Binds U8 snoRNA. This Homo sapiens (Human) protein is Tudor-interacting repair regulator protein.